A 224-amino-acid chain; its full sequence is C-&gt;U-editing enzyme APOBEC-2 (224 aa).

The segment at 1–24 (MAQKEEAAVATEAASQNGEDLENL) is disordered. The Zn(2+) site is built by Glu-60 and His-98. The 106-residue stretch at 64–169 (GRNKTFLCYV…PEIQAALKKL (106 aa)) folds into the CMP/dCMP-type deaminase domain. Glu-100 acts as the Proton donor in catalysis. Zn(2+) contacts are provided by Cys-128 and Cys-131.

Belongs to the cytidine and deoxycytidylate deaminase family. Homotetramer. Zn(2+) is required as a cofactor. As to expression, expressed exclusively in heart and skeletal muscle.

The catalysed reaction is cytidine(6666) in apoB mRNA + H2O + H(+) = uridine(6666) in apoB mRNA + NH4(+). Probable C to U editing enzyme whose physiological substrate is not yet known. Does not display detectable apoB mRNA editing. Has a low intrinsic cytidine deaminase activity. May play a role in the epigenetic regulation of gene expression through the process of active DNA demethylation. The protein is C-&gt;U-editing enzyme APOBEC-2 (APOBEC2) of Homo sapiens (Human).